The following is a 328-amino-acid chain: 4-hydroxythreonine-4-phosphate dehydrogenase (328 aa).

2 residues coordinate substrate: histidine 135 and threonine 136. Residues histidine 165, histidine 210, and histidine 265 each coordinate a divalent metal cation. Residues lysine 273, asparagine 282, and arginine 291 each coordinate substrate.

The protein belongs to the PdxA family. Homodimer. Requires Zn(2+) as cofactor. Mg(2+) serves as cofactor. The cofactor is Co(2+).

It localises to the cytoplasm. The catalysed reaction is 4-(phosphooxy)-L-threonine + NAD(+) = 3-amino-2-oxopropyl phosphate + CO2 + NADH. Its pathway is cofactor biosynthesis; pyridoxine 5'-phosphate biosynthesis; pyridoxine 5'-phosphate from D-erythrose 4-phosphate: step 4/5. Functionally, catalyzes the NAD(P)-dependent oxidation of 4-(phosphooxy)-L-threonine (HTP) into 2-amino-3-oxo-4-(phosphooxy)butyric acid which spontaneously decarboxylates to form 3-amino-2-oxopropyl phosphate (AHAP). The sequence is that of 4-hydroxythreonine-4-phosphate dehydrogenase from Enterobacter sp. (strain 638).